We begin with the raw amino-acid sequence, 221 residues long: Protein Pisl_1005 (221 aa).

Positions 8–201 (EEGAYLVKLA…EKTPGGEIYE (194 aa)) constitute an AMMECR1 domain.

The chain is Protein Pisl_1005 from Pyrobaculum islandicum (strain DSM 4184 / JCM 9189 / GEO3).